A 158-amino-acid polypeptide reads, in one-letter code: Ribosomal RNA large subunit methyltransferase H (158 aa).

S-adenosyl-L-methionine is bound by residues L74, G105, and 124 to 129 (LGPLTL).

Belongs to the RNA methyltransferase RlmH family. As to quaternary structure, homodimer.

It is found in the cytoplasm. The enzyme catalyses pseudouridine(1915) in 23S rRNA + S-adenosyl-L-methionine = N(3)-methylpseudouridine(1915) in 23S rRNA + S-adenosyl-L-homocysteine + H(+). Its function is as follows. Specifically methylates the pseudouridine at position 1915 (m3Psi1915) in 23S rRNA. The chain is Ribosomal RNA large subunit methyltransferase H from Xylella fastidiosa (strain Temecula1 / ATCC 700964).